The chain runs to 116 residues: Large ribosomal subunit protein bL20 (116 aa).

The protein belongs to the bacterial ribosomal protein bL20 family.

Binds directly to 23S ribosomal RNA and is necessary for the in vitro assembly process of the 50S ribosomal subunit. It is not involved in the protein synthesizing functions of that subunit. This is Large ribosomal subunit protein bL20 from Helicobacter pylori (strain Shi470).